The primary structure comprises 570 residues: Protein NRT1/ PTR FAMILY 8.2 (570 aa).

Threonine 99 carries the phosphothreonine modification. The next 10 membrane-spanning stretches (helical) occupy residues 100-120, 136-156, 182-202, 210-230, 335-355, 370-390, 414-434, 454-474, 493-513, and 537-557; these read IASF…SASV, AGQT…TGGI, FFNW…SVLV, WGWG…FFFA, IWAT…VFVL, IPSA…APVY, IGIG…LEVA, IFWQ…TFIG, ALSL…VTLV, and YFFW…LWIA.

This sequence belongs to the major facilitator superfamily. Proton-dependent oligopeptide transporter (POT/PTR) (TC 2.A.17) family. As to expression, expressed in developing and germinating pollen grains and ovules.

It is found in the cell membrane. Peptide transporter. Mediates the transport of di- and tripeptides. High affinity transporter. Involved in the uptake of peptides during pollen germination and tube growth. This chain is Protein NRT1/ PTR FAMILY 8.2 (NPF8.2), found in Arabidopsis thaliana (Mouse-ear cress).